A 259-amino-acid chain; its full sequence is Kynurenine formamidase (259 aa).

Residues 34–38 carry the HGGXW motif; that stretch reads HGGAW. S103 serves as the catalytic Nucleophile. Active-site residues include D196 and H228.

Belongs to the kynurenine formamidase family. Homodimer.

It carries out the reaction N-formyl-L-kynurenine + H2O = L-kynurenine + formate + H(+). It participates in amino-acid degradation; L-tryptophan degradation via kynurenine pathway; L-kynurenine from L-tryptophan: step 2/2. Its function is as follows. Catalyzes the hydrolysis of N-formyl-L-kynurenine to L-kynurenine, the second step in the kynurenine pathway of tryptophan degradation. Kynurenine may be further oxidized to nicotinic acid, NAD(H) and NADP(H). Required for elimination of toxic metabolites. The polypeptide is Kynurenine formamidase (Meyerozyma guilliermondii (strain ATCC 6260 / CBS 566 / DSM 6381 / JCM 1539 / NBRC 10279 / NRRL Y-324) (Yeast)).